Here is a 117-residue protein sequence, read N- to C-terminus: Large ribosomal subunit protein uL18 (117 aa).

It belongs to the universal ribosomal protein uL18 family. Part of the 50S ribosomal subunit; part of the 5S rRNA/L5/L18/L25 subcomplex. Contacts the 5S and 23S rRNAs.

Its function is as follows. This is one of the proteins that bind and probably mediate the attachment of the 5S RNA into the large ribosomal subunit, where it forms part of the central protuberance. The polypeptide is Large ribosomal subunit protein uL18 (Vibrio vulnificus (strain CMCP6)).